The primary structure comprises 250 residues: DNA repair protein RecO (250 aa).

The protein belongs to the RecO family.

In terms of biological role, involved in DNA repair and RecF pathway recombination. The sequence is that of DNA repair protein RecO from Rhodospirillum centenum (strain ATCC 51521 / SW).